A 511-amino-acid polypeptide reads, in one-letter code: 2,3-bisphosphoglycerate-independent phosphoglycerate mutase (511 aa).

Aspartate 12 provides a ligand contact to Mn(2+). Tyrosine 36 carries the post-translational modification Phosphotyrosine. Serine 62 contributes to the Mn(2+) binding site. Residue serine 62 is the Phosphoserine intermediate of the active site. Substrate contacts are provided by residues histidine 123, 153–154 (RD), arginine 185, arginine 191, 261–264 (RPDR), and lysine 336. Mn(2+) is bound by residues aspartate 403, histidine 407, aspartate 444, histidine 445, and histidine 462.

Belongs to the BPG-independent phosphoglycerate mutase family. In terms of assembly, monomer. The cofactor is Mn(2+).

The enzyme catalyses (2R)-2-phosphoglycerate = (2R)-3-phosphoglycerate. Its pathway is carbohydrate degradation; glycolysis; pyruvate from D-glyceraldehyde 3-phosphate: step 3/5. Functionally, essential for rapid growth and for sporulation. Catalyzes the interconversion of 2-phosphoglycerate and 3-phosphoglycerate. The protein is 2,3-bisphosphoglycerate-independent phosphoglycerate mutase of Bacillus licheniformis (strain ATCC 14580 / DSM 13 / JCM 2505 / CCUG 7422 / NBRC 12200 / NCIMB 9375 / NCTC 10341 / NRRL NRS-1264 / Gibson 46).